We begin with the raw amino-acid sequence, 505 residues long: Flagellin (505 aa).

The protein belongs to the bacterial flagellin family.

The protein resides in the secreted. Its subcellular location is the bacterial flagellum. Its function is as follows. Flagellin is the subunit protein which polymerizes to form the filaments of bacterial flagella. This chain is Flagellin (fliC), found in Salmonella moscow.